A 219-amino-acid chain; its full sequence is 3,4-dihydroxy-2-butanone 4-phosphate synthase (219 aa).

D-ribulose 5-phosphate-binding positions include 37-38, Asp42, 150-154, and Glu174; these read RE and RRGHT. Glu38 contacts Mg(2+). His153 is a binding site for Mg(2+).

The protein belongs to the DHBP synthase family. In terms of assembly, homodimer. Requires Mg(2+) as cofactor. The cofactor is Mn(2+).

The enzyme catalyses D-ribulose 5-phosphate = (2S)-2-hydroxy-3-oxobutyl phosphate + formate + H(+). The protein operates within cofactor biosynthesis; riboflavin biosynthesis; 2-hydroxy-3-oxobutyl phosphate from D-ribulose 5-phosphate: step 1/1. Catalyzes the conversion of D-ribulose 5-phosphate to formate and 3,4-dihydroxy-2-butanone 4-phosphate. The polypeptide is 3,4-dihydroxy-2-butanone 4-phosphate synthase (Oleidesulfovibrio alaskensis (strain ATCC BAA-1058 / DSM 17464 / G20) (Desulfovibrio alaskensis)).